A 319-amino-acid polypeptide reads, in one-letter code: MAENKITGKVHFLQCLKQTIAYLTYLNRRIKHDRLTIAAGSMAYVTLLSLVPMITVVLAALSAFPVFAGLGELLQNFVIENFVPAAGEVVKTYLNEFVANAGKMTAVGIGALFVVAMMLMSSIDHALNYIWRVHEKRRPVISFSIYWMVLTLGPILVGSSIAVSSYLGSLNLLNSEAVNGLFQQTLRALPVIMSSSAFLGLYLLVPNLKVKFSHALLGALVASSLFELSKKGFALYISNFPSYQVIYGALAVIPILFVWVYLCWCIVLLGAEITASLGERKQWQLSSGEPITSKDCDVKVMAKNEQEKSSEAENNKGTK.

The next 6 membrane-spanning stretches (helical) occupy residues 50–70 (LVPM…FAGL), 107–127 (VGIG…DHAL), 143–163 (FSIY…SIAV), 188–208 (ALPV…VPNL), 215–235 (ALLG…GFAL), and 249–269 (ALAV…IVLL).

Belongs to the UPF0761 family.

Its subcellular location is the cell inner membrane. In Photobacterium profundum (strain SS9), this protein is UPF0761 membrane protein PBPRA3489.